We begin with the raw amino-acid sequence, 62 residues long: Large ribosomal subunit protein bL28 (62 aa).

Positions 1-28 (MARVCTITGRKARSGNSRSHAMNATKRK) are disordered.

This sequence belongs to the bacterial ribosomal protein bL28 family.

The polypeptide is Large ribosomal subunit protein bL28 (Bacillus anthracis (strain CDC 684 / NRRL 3495)).